A 757-amino-acid polypeptide reads, in one-letter code: Receptor protein kinase-like protein At4g34220 (757 aa).

A signal peptide spans 1–26 (MTSNRSNLLFSLVLFHFLFVPTQLQA). LRR repeat units follow at residues 104–126 (YLRI…VFNA), 128–150 (ELQS…VNSV), 152–174 (NLQL…ISLL), 176–198 (NLTV…FEAA), 199–219 (QILD…LGGK), 220–242 (SLHY…FAEK), and 245–267 (ANAT…LSLL). Residues 339 to 359 (IAAITVADIVGLAFIGLLVLY) traverse the membrane as a helical segment. The 283-residue stretch at 471–753 (KASAYILGTT…KELVQVLEKI (283 aa)) folds into the Protein kinase domain. S473 is modified (phosphoserine). The residue at position 494 (T494) is a Phosphothreonine. Position 553 is a phosphoserine (S553). The tract at residues 633–654 (ARESHTTGPTSSSPYQPPEWST) is disordered. Residues T638 and T639 each carry the phosphothreonine modification. Residues 638 to 654 (TTGPTSSSPYQPPEWST) are compositionally biased toward polar residues.

The protein belongs to the protein kinase superfamily.

Its subcellular location is the membrane. This Arabidopsis thaliana (Mouse-ear cress) protein is Receptor protein kinase-like protein At4g34220.